Reading from the N-terminus, the 283-residue chain is Nucleotide-binding protein DR_1434 (283 aa).

8–15 (GLSGSGKS) serves as a coordination point for ATP. Residue 57 to 60 (DTRT) coordinates GTP.

Belongs to the RapZ-like family.

Displays ATPase and GTPase activities. This is Nucleotide-binding protein DR_1434 from Deinococcus radiodurans (strain ATCC 13939 / DSM 20539 / JCM 16871 / CCUG 27074 / LMG 4051 / NBRC 15346 / NCIMB 9279 / VKM B-1422 / R1).